The chain runs to 316 residues: Erythritol catabolism regulatory protein EryD (316 aa).

The H-T-H motif DNA-binding region spans 23 to 42 (QSAVAKRLGLPSVKAHRLIA).

The protein belongs to the SorC transcriptional regulatory family.

Its activity is regulated as follows. Erythritol may act as an inducer, probably by binding to EryD and inhibiting its repressor activity. In terms of biological role, represses the expression of the eryABCD operon, which is involved in erythritol catabolism. The sequence is that of Erythritol catabolism regulatory protein EryD from Brucella abortus (strain 2308).